The chain runs to 526 residues: Na(+)/H(+) antiporter NhaB (526 aa).

A run of 12 helical transmembrane segments spans residues 25–45 (ILLF…IAGW), 52–72 (IFTL…LLAI), 89–109 (LVAN…IYFM), 130–164 (LSLA…FYAI), 204–224 (LMMH…VGEP), 242–262 (IRMS…CVLV), 307–327 (IALW…LIGL), 350–370 (QEAL…AVII), 391–411 (LALF…VFVG), 448–468 (VATP…LAPL), 479–499 (MALP…EMLL), and 505–525 (WFYQ…LPVL).

It belongs to the NhaB Na(+)/H(+) (TC 2.A.34) antiporter family.

It localises to the cell inner membrane. The enzyme catalyses 2 Na(+)(in) + 3 H(+)(out) = 2 Na(+)(out) + 3 H(+)(in). Its function is as follows. Na(+)/H(+) antiporter that extrudes sodium in exchange for external protons. This Aeromonas hydrophila subsp. hydrophila (strain ATCC 7966 / DSM 30187 / BCRC 13018 / CCUG 14551 / JCM 1027 / KCTC 2358 / NCIMB 9240 / NCTC 8049) protein is Na(+)/H(+) antiporter NhaB.